A 901-amino-acid polypeptide reads, in one-letter code: Protein translocase subunit SecA (901 aa).

Residues Gln-85, 103-107 (GEGKT), and Asp-510 contribute to the ATP site. Residues 847-901 (TRINQNNLPVDENSQTTQNSETEDYSDRRIGRNEPCPCGSGKKYKHCHGSRVARQ) are disordered. Residues 848-866 (RINQNNLPVDENSQTTQNS) are compositionally biased toward polar residues. The Zn(2+) site is built by Cys-882, Cys-884, Cys-893, and His-894. The span at 888–901 (KKYKHCHGSRVARQ) shows a compositional bias: basic residues.

It belongs to the SecA family. As to quaternary structure, monomer and homodimer. Part of the essential Sec protein translocation apparatus which comprises SecA, SecYEG and auxiliary proteins SecDF-YajC and YidC. The cofactor is Zn(2+).

It localises to the cell inner membrane. It is found in the cytoplasm. It carries out the reaction ATP + H2O + cellular proteinSide 1 = ADP + phosphate + cellular proteinSide 2.. Its function is as follows. Part of the Sec protein translocase complex. Interacts with the SecYEG preprotein conducting channel. Has a central role in coupling the hydrolysis of ATP to the transfer of proteins into and across the cell membrane, serving both as a receptor for the preprotein-SecB complex and as an ATP-driven molecular motor driving the stepwise translocation of polypeptide chains across the membrane. The sequence is that of Protein translocase subunit SecA from Haemophilus influenzae (strain PittGG).